Reading from the N-terminus, the 742-residue chain is 5-methyltetrahydropteroyltriglutamate--homocysteine methyltransferase (742 aa).

5-methyltetrahydropteroyltri-L-glutamate contacts are provided by residues 18–21 and K112; that span reads REWK. Residues 420–422 and E473 each bind L-homocysteine; that span reads IGS. L-methionine contacts are provided by residues 420-422 and E473; that span reads IGS. W550 provides a ligand contact to 5-methyltetrahydropteroyltri-L-glutamate. An L-homocysteine-binding site is contributed by D588. D588 lines the L-methionine pocket. E594 is a 5-methyltetrahydropteroyltri-L-glutamate binding site. Residues H630, C632, and E654 each contribute to the Zn(2+) site. The active-site Proton donor is the H683. Zn(2+) is bound at residue C715.

It belongs to the vitamin-B12 independent methionine synthase family. Zn(2+) serves as cofactor.

It carries out the reaction 5-methyltetrahydropteroyltri-L-glutamate + L-homocysteine = tetrahydropteroyltri-L-glutamate + L-methionine. The protein operates within amino-acid biosynthesis; L-methionine biosynthesis via de novo pathway; L-methionine from L-homocysteine (MetE route): step 1/1. Its function is as follows. Catalyzes the transfer of a methyl group from 5-methyltetrahydrofolate to homocysteine resulting in methionine formation. The chain is 5-methyltetrahydropteroyltriglutamate--homocysteine methyltransferase from Staphylococcus aureus (strain Mu3 / ATCC 700698).